A 232-amino-acid chain; its full sequence is Large ribosomal subunit protein uL1 (232 aa).

This sequence belongs to the universal ribosomal protein uL1 family. As to quaternary structure, part of the 50S ribosomal subunit.

Functionally, binds directly to 23S rRNA. The L1 stalk is quite mobile in the ribosome, and is involved in E site tRNA release. Protein L1 is also a translational repressor protein, it controls the translation of the L11 operon by binding to its mRNA. The polypeptide is Large ribosomal subunit protein uL1 (Bartonella bacilliformis (strain ATCC 35685 / KC583 / Herrer 020/F12,63)).